We begin with the raw amino-acid sequence, 159 residues long: uncharacterized protein (159 aa).

Residues I4–C153 form the N-acetyltransferase domain.

It belongs to the acetyltransferase family.

This is an uncharacterized protein from Escherichia coli (strain K12).